The primary structure comprises 357 residues: UDP-N-acetylglucosamine--N-acetylmuramyl-(pentapeptide) pyrophosphoryl-undecaprenol N-acetylglucosamine transferase (357 aa).

Residues 14–16 (TGG), asparagine 126, arginine 162, serine 190, isoleucine 246, 265–270 (ALTVCE), and glutamine 290 contribute to the UDP-N-acetyl-alpha-D-glucosamine site.

The protein belongs to the glycosyltransferase 28 family. MurG subfamily.

It is found in the cell inner membrane. It carries out the reaction di-trans,octa-cis-undecaprenyl diphospho-N-acetyl-alpha-D-muramoyl-L-alanyl-D-glutamyl-meso-2,6-diaminopimeloyl-D-alanyl-D-alanine + UDP-N-acetyl-alpha-D-glucosamine = di-trans,octa-cis-undecaprenyl diphospho-[N-acetyl-alpha-D-glucosaminyl-(1-&gt;4)]-N-acetyl-alpha-D-muramoyl-L-alanyl-D-glutamyl-meso-2,6-diaminopimeloyl-D-alanyl-D-alanine + UDP + H(+). The protein operates within cell wall biogenesis; peptidoglycan biosynthesis. Functionally, cell wall formation. Catalyzes the transfer of a GlcNAc subunit on undecaprenyl-pyrophosphoryl-MurNAc-pentapeptide (lipid intermediate I) to form undecaprenyl-pyrophosphoryl-MurNAc-(pentapeptide)GlcNAc (lipid intermediate II). This Histophilus somni (strain 129Pt) (Haemophilus somnus) protein is UDP-N-acetylglucosamine--N-acetylmuramyl-(pentapeptide) pyrophosphoryl-undecaprenol N-acetylglucosamine transferase.